A 322-amino-acid polypeptide reads, in one-letter code: Glycerol-3-phosphate dehydrogenase [NAD(P)+] (322 aa).

Residues Trp11, Arg31, Arg32, and Lys101 each coordinate NADPH. Residues Lys101 and Gly130 each contribute to the sn-glycerol 3-phosphate site. Ala134 lines the NADPH pocket. Sn-glycerol 3-phosphate is bound by residues Lys184, Asp237, Ser247, Arg248, and Asn249. Residue Lys184 is the Proton acceptor of the active site. Arg248 lines the NADPH pocket. 2 residues coordinate NADPH: Val270 and Glu272.

Belongs to the NAD-dependent glycerol-3-phosphate dehydrogenase family.

It localises to the cytoplasm. It catalyses the reaction sn-glycerol 3-phosphate + NAD(+) = dihydroxyacetone phosphate + NADH + H(+). It carries out the reaction sn-glycerol 3-phosphate + NADP(+) = dihydroxyacetone phosphate + NADPH + H(+). The protein operates within membrane lipid metabolism; glycerophospholipid metabolism. Functionally, catalyzes the reduction of the glycolytic intermediate dihydroxyacetone phosphate (DHAP) to sn-glycerol 3-phosphate (G3P), the key precursor for phospholipid synthesis. This chain is Glycerol-3-phosphate dehydrogenase [NAD(P)+], found in Thermus thermophilus (strain ATCC BAA-163 / DSM 7039 / HB27).